Reading from the N-terminus, the 190-residue chain is Potassium-transporting ATPase KdpC subunit (190 aa).

A helical transmembrane segment spans residues T10–G30.

Belongs to the KdpC family. In terms of assembly, the system is composed of three essential subunits: KdpA, KdpB and KdpC.

The protein resides in the cell inner membrane. Part of the high-affinity ATP-driven potassium transport (or Kdp) system, which catalyzes the hydrolysis of ATP coupled with the electrogenic transport of potassium into the cytoplasm. This subunit acts as a catalytic chaperone that increases the ATP-binding affinity of the ATP-hydrolyzing subunit KdpB by the formation of a transient KdpB/KdpC/ATP ternary complex. This chain is Potassium-transporting ATPase KdpC subunit, found in Escherichia fergusonii (strain ATCC 35469 / DSM 13698 / CCUG 18766 / IAM 14443 / JCM 21226 / LMG 7866 / NBRC 102419 / NCTC 12128 / CDC 0568-73).